The primary structure comprises 1411 residues: Early endosome antigen 1 (1411 aa).

A disordered region spans residues methionine 1–isoleucine 27. Over residues serine 15–isoleucine 27 the composition is skewed to polar residues. The C2H2-type zinc finger occupies phenylalanine 41–histidine 64. 2 positions are modified to phosphoserine: serine 52 and serine 70. The stretch at leucine 78–lysine 1348 forms a coiled coil. 2 disordered regions span residues serine 476 to threonine 501 and glutamate 1189 to lysine 1217. Basic and acidic residues predominate over residues histidine 481 to histidine 490. Over residues glutamine 491–alanine 500 the composition is skewed to low complexity. The FYVE-type zinc-finger motif lies at aspartate 1352 to glutamine 1410. Residues cysteine 1358, cysteine 1361, cysteine 1374, cysteine 1377, cysteine 1382, cysteine 1385, cysteine 1402, and cysteine 1405 each contribute to the Zn(2+) site.

As to quaternary structure, homodimer. Binds STX6. Binds RAB5A, RAB5B, RAB5C and RAB22A that have been activated by GTP-binding. Interacts with ERBB2. Interacts with RAB31. Interacts with SAMD9 and SAMD9L. May interact with PLEKHF2.

Its subcellular location is the cytoplasm. The protein resides in the early endosome membrane. In terms of biological role, binds phospholipid vesicles containing phosphatidylinositol 3-phosphate and participates in endosomal trafficking. This Mus musculus (Mouse) protein is Early endosome antigen 1 (Eea1).